A 185-amino-acid chain; its full sequence is Large ribosomal subunit protein uL5 (185 aa).

It belongs to the universal ribosomal protein uL5 family. Part of the 50S ribosomal subunit; part of the 5S rRNA/L5/L18/L25 subcomplex. Contacts the 5S rRNA and the P site tRNA. Forms a bridge to the 30S subunit in the 70S ribosome.

Functionally, this is one of the proteins that bind and probably mediate the attachment of the 5S RNA into the large ribosomal subunit, where it forms part of the central protuberance. In the 70S ribosome it contacts protein S13 of the 30S subunit (bridge B1b), connecting the 2 subunits; this bridge is implicated in subunit movement. Contacts the P site tRNA; the 5S rRNA and some of its associated proteins might help stabilize positioning of ribosome-bound tRNAs. In Brucella abortus (strain 2308), this protein is Large ribosomal subunit protein uL5.